The sequence spans 623 residues: Prothrombin (623 aa).

The N-terminal stretch at 1–24 (MAHVGGLWLHGCLALAVLVSLVHS) is a signal peptide. Positions 25-43 (QHVFMAPQQALSLLQRARR) are excised as a propeptide. Residues 44 to 90 (ANSGFFEEMRKGNLERECVEEQCSREEAYEALESPSETDAFWAKYTA) form the Gla domain. A 4-carboxyglutamate mark is found at glutamate 50, glutamate 51, glutamate 58, glutamate 60, glutamate 63, glutamate 64, glutamate 69, glutamate 70, glutamate 73, and glutamate 76. The cysteines at positions 61 and 66 are disulfide-linked. Intrachain disulfides connect cysteine 91–cysteine 104, cysteine 109–cysteine 187, cysteine 130–cysteine 170, cysteine 158–cysteine 182, cysteine 214–cysteine 292, cysteine 235–cysteine 275, cysteine 263–cysteine 287, cysteine 337–cysteine 483, cysteine 392–cysteine 408, cysteine 537–cysteine 551, and cysteine 565–cysteine 595. 2 consecutive Kringle domains span residues 108–187 (NCAE…IPVC) and 213–292 (TCVP…LDYC). Asparagine 120 and asparagine 144 each carry an N-linked (GlcNAc...) asparagine glycan. The Peptidase S1 domain maps to 365–619 (IVEGSDAEIG…LKKWMQKVID (255 aa)). The active-site Charge relay system is histidine 407. Asparagine 417 carries an N-linked (GlcNAc...) asparagine glycan. Residue aspartate 463 is the Charge relay system of the active site. The segment at 552–574 (AGYKPDEGKRGDACEGDSGGPFV) is high affinity receptor-binding region which is also known as the TP508 peptide. The active-site Charge relay system is the serine 569.

Belongs to the peptidase S1 family. Heterodimer (named alpha-thrombin) of a light and a heavy chain; disulfide-linked. Forms a heterodimer with SERPINA5. In plasma, interacts (via N-terminus) with alpha-1-microglobulin; this interaction does not prevent the activation of prothrombin to thrombin. Post-translationally, the gamma-carboxyglutamyl residues, which bind calcium ions, result from the carboxylation of glutamyl residues by a microsomal enzyme, the vitamin K-dependent carboxylase. The modified residues are necessary for the calcium-dependent interaction with a negatively charged phospholipid surface, which is essential for the conversion of prothrombin to thrombin. In terms of processing, in the penultimate step of the coagulation cascade, prothrombin is converted to thrombin by the prothrombinase complex composed of factor Xa (F10), cofactor Va (F5), and phospholipids. This activation requires factor Xa-catalyzed sequential cleavage at 2 sites, Arg-315 and Arg-364, along 2 possible pathways. In the first pathway, the first cleavage occurs at Arg-315, leading to the formation of the inactive intermediate prethrombin-2. This pathway preferentially occurs on platelets and in the absence of cofactor Va. In the second pathway, the first cleavage occurs at Arg-364, which separates protease domain into 2 chains that remain connected through a disulfide bond and generates the active intermediate meizothrombin. The presence of cofactor Va directs activation along the meizothrombin pathway and greatly accelerates the rate of cleavage at Arg-364, but has a smaller effect on the cleavage of meizothrombin at Arg-315. Meizothrombin accumulates as an intermediate when prothrombinase is assembled on the membrane of red blood cells.

It carries out the reaction Selective cleavage of Arg-|-Gly bonds in fibrinogen to form fibrin and release fibrinopeptides A and B.. Its activity is regulated as follows. Activity is promoted in the presence of negatively charged surfaces, such as polyphosphate and dextran sulfate. Inhibited by SERPINA5. Thrombin, which cleaves bonds after Arg and Lys, converts fibrinogen to fibrin and activates factors V, VII, VIII, XIII, and, in complex with thrombomodulin, protein C. Functions in blood homeostasis, inflammation and wound healing. Activates coagulation factor XI (F11); activation is promoted by the contact with negatively charged surfaces. Triggers the production of pro-inflammatory cytokines, such as MCP-1/CCL2 and IL8/CXCL8, in endothelial cells. The polypeptide is Prothrombin (F2) (Sus scrofa (Pig)).